The following is a 282-amino-acid chain: NADPH-dependent 7-cyano-7-deazaguanine reductase (282 aa).

Residue 88-90 participates in substrate binding; sequence IES. 90–91 is a binding site for NADPH; the sequence is SK. Catalysis depends on Cys190, which acts as the Thioimide intermediate. Catalysis depends on Asp197, which acts as the Proton donor. 229 to 230 is a binding site for substrate; sequence HE. 258-259 is an NADPH binding site; sequence RG.

This sequence belongs to the GTP cyclohydrolase I family. QueF type 2 subfamily. As to quaternary structure, homodimer.

It is found in the cytoplasm. It carries out the reaction 7-aminomethyl-7-carbaguanine + 2 NADP(+) = 7-cyano-7-deazaguanine + 2 NADPH + 3 H(+). It functions in the pathway tRNA modification; tRNA-queuosine biosynthesis. Its function is as follows. Catalyzes the NADPH-dependent reduction of 7-cyano-7-deazaguanine (preQ0) to 7-aminomethyl-7-deazaguanine (preQ1). This chain is NADPH-dependent 7-cyano-7-deazaguanine reductase, found in Salmonella paratyphi A (strain ATCC 9150 / SARB42).